Here is a 203-residue protein sequence, read N- to C-terminus: Secreted phosphoprotein 24 (203 aa).

Positions 1–23 (MEKMAMKMLVIFVLGMNHWTCTG) are cleaved as a signal peptide. 2 disulfides stabilise this stretch: Cys86-Cys97 and Cys110-Cys128. The residue at position 90 (Ser90) is a Phosphoserine. Phosphoserine occurs at positions 138, 139, 166, and 175.

It belongs to the SPP2 family. In terms of processing, multiply phosphorylated at serine residues in Ser-X-Glu/Ser(P) sequences, a recognition motif for phosphorylation by secretory pathway protein kinase. Phosphorylation sites are present in the extracellular medium. In liver and bone but not in heart, lung, kidney, or spleen.

It localises to the secreted. In terms of biological role, could coordinate an aspect of bone turnover. This chain is Secreted phosphoprotein 24 (SPP2), found in Bos taurus (Bovine).